A 429-amino-acid chain; its full sequence is Uracil permease (429 aa).

The Cytoplasmic portion of the chain corresponds to 1-13 (MTRRAIGVSERPP). A helical membrane pass occupies residues 14-37 (LLQTIPLSLQHLFAMFGATVLVPV). At 38–41 (LFHI) the chain is on the periplasmic side. Residues 42–61 (NPATVLLFNGIGTLLYLFIC) form a helical membrane-spanning segment. Residues 62–64 (KGK) lie on the Cytoplasmic side of the membrane. Residues 65–81 (IPAYLGSSFAFISPVLL) traverse the membrane as a discontinuously helical segment. Phenylalanine 73 is a uracil binding site. Residues 82–89 (LLPLGYEV) lie on the Periplasmic side of the membrane. The helical transmembrane segment at 90-110 (ALGGFIMCGVLFCLVSFIVKK) threads the bilayer. Over 111 to 122 (AGTGWLDVLFPP) the chain is Cytoplasmic. A helical transmembrane segment spans residues 123–144 (AAMGAIVAVIGLELAGVAAGMA). Residues 145–155 (GLLPAEGQTPD) lie on the Periplasmic side of the membrane. The chain crosses the membrane as a helical span at residues 156-171 (SKTIIISITTLAVTVL). The Cytoplasmic segment spans residues 172-178 (GSVLFRG). A helical transmembrane segment spans residues 179–199 (FLAIIPILIGVLVGYALSFAM). Residues 200–224 (GIVDTTPIINAHWFALPTLYTPRFE) lie on the Periplasmic side of the membrane. The chain crosses the membrane as a helical span at residues 225 to 248 (WFAILTILPAALVVIAEHVGHLVV). Uracil is bound at residue glutamate 241. Topologically, residues 249–261 (TANIVKKDLLRDP) are cytoplasmic. A helical transmembrane segment spans residues 262 to 281 (GLHRSMFANGLSTVISGFFG). Residues 282 to 298 (STPNTTYGENIGVMAIT) form a discontinuously helical membrane-spanning segment. Uracil contacts are provided by glycine 289 and glutamate 290. Topologically, residues 299–301 (RVY) are cytoplasmic. A helical transmembrane segment spans residues 302–319 (STWVIGGAAIFAILLSCV). Topologically, residues 320–332 (GKLAAAIQMIPLP) are periplasmic. A helical transmembrane segment spans residues 333 to 354 (VMGGVSLLLYGVIGASGIRVLI). Topologically, residues 355-365 (ESKVDYNKAQN) are cytoplasmic. The discontinuously helical intramembrane region spans 366–401 (LILTSVILIIGVSGAKVNIGAAELKGMALATIVGIG). The Cytoplasmic portion of the chain corresponds to 402-429 (LSLIFKLISVLRPEEVVLDAEDADITDK).

The protein belongs to the nucleobase:cation symporter-2 (NCS2) (TC 2.A.40) family.

It localises to the cell inner membrane. It catalyses the reaction uracil(in) + H(+)(in) = uracil(out) + H(+)(out). Functionally, transport of uracil in the cell. The protein is Uracil permease (uraA) of Escherichia coli O157:H7.